Here is a 217-residue protein sequence, read N- to C-terminus: Ribosomal RNA large subunit methyltransferase E (217 aa).

S-adenosyl-L-methionine contacts are provided by glycine 71, tryptophan 73, aspartate 91, aspartate 107, and aspartate 132. The Proton acceptor role is filled by lysine 172.

It belongs to the class I-like SAM-binding methyltransferase superfamily. RNA methyltransferase RlmE family.

It is found in the cytoplasm. The catalysed reaction is uridine(2552) in 23S rRNA + S-adenosyl-L-methionine = 2'-O-methyluridine(2552) in 23S rRNA + S-adenosyl-L-homocysteine + H(+). Its function is as follows. Specifically methylates the uridine in position 2552 of 23S rRNA at the 2'-O position of the ribose in the fully assembled 50S ribosomal subunit. This Psychromonas ingrahamii (strain DSM 17664 / CCUG 51855 / 37) protein is Ribosomal RNA large subunit methyltransferase E.